Consider the following 51-residue polypeptide: Large ribosomal subunit protein bL33 (51 aa).

The protein belongs to the bacterial ribosomal protein bL33 family.

The chain is Large ribosomal subunit protein bL33 from Pseudoalteromonas atlantica (strain T6c / ATCC BAA-1087).